A 371-amino-acid polypeptide reads, in one-letter code: Cathepsin W (371 aa).

The signal sequence occupies residues 1–21 (MTLTAHLSYFLVLLLAGQGLS). Positions 22-125 (DSLLTKDAGP…KVESNTWGES (104 aa)) are excised as a propeptide. Residues Asn-48 and Asn-112 are each glycosylated (N-linked (GlcNAc...) asparagine). Cystine bridges form between Cys-148–Cys-189, Cys-182–Cys-224, and Cys-282–Cys-347. Residue Cys-151 is part of the active site. Asn-203 is a glycosylation site (N-linked (GlcNAc...) asparagine). Active-site residues include His-289 and Asn-326. A glycan (N-linked (GlcNAc...) asparagine) is linked at Asn-344.

The protein belongs to the peptidase C1 family.

It localises to the endoplasmic reticulum. Functionally, may have a specific function in the mechanism or regulation of T-cell cytolytic activity. The polypeptide is Cathepsin W (Ctsw) (Mus musculus (Mouse)).